Here is an 897-residue protein sequence, read N- to C-terminus: MRSKHLVTLFIITFLSFSTVKVWGKDVFAGFVTKKLKTLLDCNFALYYNFKGNGPDAGSFLDFVDEPEQFYWFVEHFLSVKFRVPKHLKDKNIHNFTPCLNRSWVSEFLKEYEEPFVNPVMKFLDKEQRLFFTYNFGDVEPQGKYTYFPVKEFHKYCILPPLIKTNIKDGESGEFLKYQLNKEEYKVFLSSVGSQMTAIKNLYSTVEDEQRKQLLKVIIENESTNDISVQCPTYNIKLHYTKECANSNNILKCIDEFLRKTCEKKTESKHPSADLCEHLQFLFESLKNPYLDNFKKFMTNSDFTLIKPQSVWNVPIFDIYKPKNYLDSVQNLDTECFKKLNSKNLIFLSFHDDIPNNPYYNVELQEIVKLSTYTYSIFDKLYNFFFVFKKSGAPISPVSVKELSHNITDFSFKEDNSEIQCQNVRKSLDLEVDVETMKGIAAEKLCKIIEKFILTKDDASKPEKSDIHRGFRILCILISTHVEAYNIVRQLLNMESMISLTRYTSLYIHKFFKSVTLLKGNFLYKNNKAIRYSRACSKASLHVPSVLYRRNIYIPETFLSLYLGLSNLVSSNPSSPFFEYAIIEFLVTYYNKGSEKFVLYFISIISVLYINEYYYEQLSCFYPKEFELIKSRMIHPNIVDRILKGIDNLMKSTRYDKMRTMYLDFESSDIFSREKVFTALYNFDSFIKTNEQLKKKNLEEISEIPVQLETSNDGIGYRKQDVLYETDKPQTMDEASYEETVDEDAHHVNEKQHSAHFLDAIAEKDILEEKTKDQDLEIELYKYMGPLKEQSKSTSAASTSDEISGSEGPSTESTSTGNQGEDKTTDNTYKEMEELEEAEGTSNLKKGLEFYKSSLKLDQLDKEKPKKKKSKRKKKRDSSSDRILLEESKTFTSENEL.

The signal sequence occupies residues 1-24 (MRSKHLVTLFIITFLSFSTVKVWG). Cystine bridges form between Cys-157/Cys-231, Cys-244/Cys-253, Cys-262/Cys-276, Cys-421/Cys-620, and Cys-475/Cys-536. Residues 597–615 (FVLYFISIISVLYINEYYY) form a helical membrane-spanning segment. 2 disordered regions span residues 788–845 (KEQS…SNLK) and 859–897 (QLDKEKPKKKKSKRKKKRDSSSDRILLEESKTFTSENEL). A compositionally biased stretch (polar residues) spans 792–801 (KSTSAASTSD). A compositionally biased stretch (low complexity) spans 802-817 (EISGSEGPSTESTSTG). Ser-804 carries the phosphoserine; by CDPK1 modification. Residues 820–832 (GEDKTTDNTYKEM) are compositionally biased toward basic and acidic residues. The segment covering 865-876 (PKKKKSKRKKKR) has biased composition (basic residues). Residues 877–889 (DSSSDRILLEESK) show a composition bias toward basic and acidic residues.

Component of the RhopH complex. RhopH complex is composed of CLAG3.1/CLAG3.2, RhopH2 and RhopH3 with a 1:1:1 subunit stoichiometry. Interacts with CLAG3.1/CLAG3.2. Interacts with CDPK1; the interaction promotes RhopH3 phosphorylation in merozoites. Proteolytically cleaved near C-terminus.

Its subcellular location is the host cell membrane. It is found in the parasitophorous vacuole membrane. It localises to the cytoplasm. The protein resides in the cytoplasmic vesicle. The protein localises to the secretory vesicle. Its subcellular location is the rhoptry. Participates in the formation of new permeability pathways in Plasmodium-infected erythrocytes enabling the uptake of nutrients from the blood plasma. Required for maintaining invasion capacity of merozoites. Required for the trophozoite to schizont developmental transition of the intracellular parasite. In Plasmodium falciparum (isolate 3D7), this protein is High molecular weight rhoptry protein 3.